Here is a 362-residue protein sequence, read N- to C-terminus: Peptide chain release factor 1 (362 aa).

At Q235 the chain carries N5-methylglutamine.

The protein belongs to the prokaryotic/mitochondrial release factor family. Post-translationally, methylated by PrmC. Methylation increases the termination efficiency of RF1.

The protein resides in the cytoplasm. In terms of biological role, peptide chain release factor 1 directs the termination of translation in response to the peptide chain termination codons UAG and UAA. The protein is Peptide chain release factor 1 of Acinetobacter baylyi (strain ATCC 33305 / BD413 / ADP1).